The sequence spans 316 residues: Phospholipase A1 3 (316 aa).

An N-terminal signal peptide occupies residues 1–4; that stretch reads ADDL. A propeptide spanning residues 5–14 is cleaved from the precursor; that stretch reads TTLRNGTLDR. C20 and C103 are disulfide-bonded. S153 functions as the Nucleophile in the catalytic mechanism. D181 acts as the Charge relay system in catalysis. 2 disulfides stabilise this stretch: C192-C197 and C235-C240. The Charge relay system role is filled by H242. 3 cysteine pairs are disulfide-bonded: C257/C284, C258/C309, and C277/C282.

It belongs to the AB hydrolase superfamily. Lipase family. As to expression, expressed by the venom gland.

The protein localises to the secreted. It carries out the reaction a 1,2-diacyl-sn-glycero-3-phosphocholine + H2O = a 2-acyl-sn-glycero-3-phosphocholine + a fatty acid + H(+). Catalyzes the hydrolysis of phosphatidylcholine with phospholipase A1 activity. May act as an allergen and induce hemolytic activity. In Polistes dominula (European paper wasp), this protein is Phospholipase A1 3.